A 1230-amino-acid chain; its full sequence is ABC transporter B family member 5 (1230 aa).

Helical transmembrane passes span 27–47, 78–98, 154–174, 177–197, 253–273, and 286–306; these read VLLMIVGSIGAIANGVCSPLM, LVYLGLGALGAAFLQVACWMI, FIQLISTFVGGFVIAFLRGWL, LVMLTSIPLLAMSGAAIAIIV, GFVTGLGLGVMFLVFFSTYAL, and GYTGGAVINVMVTVVSSSIAL. One can recognise an ABC transmembrane type-1 1 domain in the interval 30 to 318; the sequence is MIVGSIGAIA…ASPCLTAFTA (289 aa). The region spanning 353 to 589 is the ABC transporter 1 domain; the sequence is IELRDVCFSY…HEGAYSQLLR (237 aa). Position 388 to 395 (388 to 395) interacts with ATP; that stretch reads GESGSGKS. N-linked (GlcNAc...) asparagine glycosylation is found at N540, N615, and N616. The segment at 602 to 621 is disordered; that stretch reads ISDGSISSGSSRGNNSTRQD. Positions 603–617 are enriched in low complexity; it reads SDGSISSGSSRGNNS. A run of 2 helical transmembrane segments spans residues 662–682 and 707–727; these read ILILGTLVGAVNGTIFPIFGI and MIFVLLGVAAVIVYPTTNYLF. Positions 663 to 950 constitute an ABC transmembrane type-1 2 domain; that stretch reads LILGTLVGAV…ASSFAPDSSK (288 aa). Residue N759 is glycosylated (N-linked (GlcNAc...) asparagine). 3 consecutive transmembrane segments (helical) span residues 798 to 818, 889 to 909, and 924 to 944; these read IIAFTASWEVAIIILVIIPFI, GVGFGISFFVLYSVYASCFYV, and VFQVFLALTLTAVGISQASSF. Residues 985-1223 enclose the ABC transporter 2 domain; it reads IELCHISFTY…EGGVYASLVQ (239 aa). 1020–1027 serves as a coordination point for ATP; it reads GESGSGKS. N1074, N1174, and N1227 each carry an N-linked (GlcNAc...) asparagine glycan.

It belongs to the ABC transporter superfamily. ABCB family. Multidrug resistance exporter (TC 3.A.1.201) subfamily.

The protein resides in the membrane. The protein is ABC transporter B family member 5 (ABCB5) of Arabidopsis thaliana (Mouse-ear cress).